The sequence spans 87 residues: MKILFLIILTAFFIGVHCKHGYPIIRAGRDKGCKVSCVINNQYCDTECKQLKGRRGYCYFWRLACFCEYLPDYVPTWSRATNKCKAK.

Positions 1–18 are cleaved as a signal peptide; it reads MKILFLIILTAFFIGVHC. The LCN-type CS-alpha/beta domain maps to 19–85; that stretch reads KHGYPIIRAG…TWSRATNKCK (67 aa). 4 disulfide bridges follow: Cys33-Cys84, Cys37-Cys58, Cys44-Cys65, and Cys48-Cys67. Cys84 bears the Cysteine amide mark.

This sequence belongs to the long (4 C-C) scorpion toxin superfamily. Sodium channel inhibitor family. Beta subfamily. In terms of tissue distribution, expressed by the venom gland.

It localises to the secreted. Functionally, binds voltage-independently at site-4 of sodium channels (Nav) and shift the voltage of activation toward more negative potentials thereby affecting sodium channel activation and promoting spontaneous and repetitive firing. The protein is Neurotoxin LmNaTx64.1 of Lychas mucronatus (Chinese swimming scorpion).